Reading from the N-terminus, the 230-residue chain is Claudin-2 (230 aa).

At Met1–Gln7 the chain is on the cytoplasmic side. A helical transmembrane segment spans residues Leu8–Pro28. Topologically, residues Asn29–Gln81 are extracellular. The cysteines at positions 54 and 64 are disulfide-linked. A helical membrane pass occupies residues Ala82–Met102. Residues Arg103–Arg116 lie on the Cytoplasmic side of the membrane. Residues Val117–Ala137 traverse the membrane as a helical segment. The Extracellular portion of the chain corresponds to Trp138–Glu162. The helical transmembrane segment at Ala163–Phe183 threads the bilayer. Topologically, residues Ser184–Val230 are cytoplasmic. The tract at residues Thr205 to Val230 is disordered. A Glycyl lysine isopeptide (Lys-Gly) (interchain with G-Cter in SUMO) cross-link involves residue Lys218. Residues Ser219 and Ser223 each carry the phosphoserine modification. Residues Tyr229–Val230 are interactions with TJP1, TJP2 and TJP3.

The protein belongs to the claudin family. As to quaternary structure, can form homo- and heteropolymers with other claudins to mediate paracellular barrier and channel functions of tight junctions in response to physiological stimuli. Homopolymers interact with CLDN3, but not CLDN1, homopolymers. Directly interacts with TJP1/ZO-1, TJP2/ZO-2 and TJP3/ZO-3. Post-translationally, the disulfide bond is necessary for pore formation, but is not required for correct protein trafficking. As to expression, expressed in the kidney, liver and intestine, with higher levels in the ileum than in the jejunum. Low levels in the brain. Expressed in colonic epithelium (at protein level). Expressed in the perivenous regions, bile ducts, and gallbladder epithelium (at protein level).

The protein resides in the cell junction. The protein localises to the tight junction. It is found in the cell membrane. It catalyses the reaction Na(+)(in) = Na(+)(out). The catalysed reaction is K(+)(in) = K(+)(out). The enzyme catalyses Rb(+)(in) = Rb(+)(out). It carries out the reaction Li(+)(in) = Li(+)(out). It catalyses the reaction Cs(+)(in) = Cs(+)(out). The catalysed reaction is Ca(2+)(in) = Ca(2+)(out). The enzyme catalyses methylamine(out) = methylamine(in). It carries out the reaction choline(out) = choline(in). It catalyses the reaction H2O(in) = H2O(out). With respect to regulation, the channel permeability is down-regulated at acidic pH. Forms paracellular channels: polymerizes in tight junction strands with cation- and water-selective channels through the strands, conveying epithelial permeability in a process known as paracellular tight junction permeability. In intestinal epithelium, allows for sodium and water fluxes from the peritoneal side to the lumen of the intestine to regulate nutrient absorption and clear enteric pathogens as part of mucosal immune response. In kidney, allows passive sodium and calcium reabsorption across proximal tubules from the lumen back to the bloodstream. In the hepatobiliary tract, allows paracellular water and cation fluxes in the hepatic perivenous areas and biliary epithelium to generate bile flow and maintain osmotic gradients. The protein is Claudin-2 of Mus musculus (Mouse).